The primary structure comprises 694 residues: Probable methyltransferase PMT11 (694 aa).

Topologically, residues 1-14 are cytoplasmic; the sequence is MKPLTNGDLFKSPT. The helical; Signal-anchor for type II membrane protein transmembrane segment at 15–32 threads the bilayer; it reads LIKISALVFVTVAFFYLG. The Lumenal portion of the chain corresponds to 33-694; the sequence is KHWSDDGYQQ…LTCEKRLLRA (662 aa). Residues Asn-69 and Asn-77 are each glycosylated (N-linked (GlcNAc...) asparagine). Positions 83-128 are disordered; the sequence is IPATIRQQPPSVVADTEKVKVEANPPPPPPPSPSPPPPPGPVKSFG. A compositionally biased stretch (pro residues) spans 106-123; that stretch reads NPPPPPPPSPSPPPPPGP. N-linked (GlcNAc...) asparagine glycans are attached at residues Asn-155, Asn-378, and Asn-423.

It belongs to the methyltransferase superfamily.

Its subcellular location is the golgi apparatus membrane. The sequence is that of Probable methyltransferase PMT11 from Arabidopsis thaliana (Mouse-ear cress).